A 145-amino-acid chain; its full sequence is Basic phospholipase A2 beta-bungarotoxin A-AL1 chain (145 aa).

The N-terminal stretch at 1–17 (MLIFLWCGAVCVSLLGA) is a signal peptide. Residues 18-25 (ANIPPHPL) constitute a propeptide that is removed on maturation. 5 cysteine pairs are disulfide-bonded: Cys52–Cys144, Cys54–Cys70, Cys76–Cys118, Cys86–Cys111, and Cys104–Cys116. Tyr53, Gly55, and Gly57 together coordinate Ca(2+). His73 is a catalytic residue. Residue Asp119 is part of the active site.

The protein belongs to the phospholipase A2 family. Group I subfamily. G49 sub-subfamily. In terms of assembly, heterodimer; disulfide-linked. The A chains have phospholipase A2 activity and the B chains show homology with the basic protease inhibitors. Requires Ca(2+) as cofactor. In terms of processing, this enzyme lacks one of the seven disulfide bonds found in similar PLA2 proteins. In terms of tissue distribution, expressed by the venom gland.

Its subcellular location is the secreted. The catalysed reaction is a 1,2-diacyl-sn-glycero-3-phosphocholine + H2O = a 1-acyl-sn-glycero-3-phosphocholine + a fatty acid + H(+). Snake venom phospholipase A2 (PLA2) that inhibits neuromuscular transmission by blocking acetylcholine release from the nerve termini. PLA2 catalyzes the calcium-dependent hydrolysis of the 2-acyl groups in 3-sn-phosphoglycerides. This Bungarus multicinctus (Many-banded krait) protein is Basic phospholipase A2 beta-bungarotoxin A-AL1 chain.